The primary structure comprises 210 residues: UPF0173 protein PYRAB01190 (210 aa).

This sequence belongs to the UPF0173 family.

In Pyrococcus abyssi (strain GE5 / Orsay), this protein is UPF0173 protein PYRAB01190.